We begin with the raw amino-acid sequence, 286 residues long: MTQDILHRYLFDNADVRGELVQLQNSYQQVIGSHAYPPVLQTLLGELLAATSLLTATLKFSGDISVQLQGNGPVSLAVINGNNLQQLRGIARWDGELADDASLADLFGQGYMVITLTPDEGERYQGVVALDKPTLAACVEDYFNQSEQLPTALWLFADGKQAAGMFLQILPSQEDHNADFEHLCQLTATIKAEELFTLEAQEVLHRLYHQEEVRLFDPIEVSFKCTCSRERSAAAIKTIDQAEVEAILAEDGNVEMGCEYCNAKYLFDAIDIASIYANGTASNTQQ.

Cystine bridges form between cysteine 225/cysteine 227 and cysteine 258/cysteine 261.

Belongs to the HSP33 family. Under oxidizing conditions two disulfide bonds are formed involving the reactive cysteines. Under reducing conditions zinc is bound to the reactive cysteines and the protein is inactive.

It is found in the cytoplasm. Redox regulated molecular chaperone. Protects both thermally unfolding and oxidatively damaged proteins from irreversible aggregation. Plays an important role in the bacterial defense system toward oxidative stress. The chain is 33 kDa chaperonin from Shewanella oneidensis (strain ATCC 700550 / JCM 31522 / CIP 106686 / LMG 19005 / NCIMB 14063 / MR-1).